The chain runs to 904 residues: MKTAAQIRELFLRFFEEKAHRRVPSSSLVPQNDPTLLFTNAGMNQFKDVFTGREKRDYSRATTAQKCVRAGGKHNDLENVGFTARHHTFFEMLGNFSFGDYFKKEAIAWAWELVTSERWLAISKERLAATVFAGEGTLPWDEEAYRLWEAQGVPPERIHKLGAKDNFWAMGDTGPCGPCSELHFFQGNDIPCAEEKAGRTCQGVACDCDRWLEIWNLVFMQFERGADGGLTPLPKPSIDTGAGLERMAAVVQGKRSNYDIDAFQSIIRAIEKLAGKRYGATDADDDVSMRVIADHARATTFLVGDGVLPANEGRGYVLRRIMRRAIRHGKRLGLERPFLADVCEAVMEEMGGAYPETRENRAFIVKVAGQEEESFRRTLDKGLAILETEMRKAIPPETHLGKPATPPPSAPRPVIDGKLAFQLYDTFGFPLDLTRVIAAERGFDVDEQGFDRNMAEQRARSEWKGSGEQAVGDLHKQIASELGETRFLGYEAPTARAEVKALLANGARAAKAARGDKVEVVTAATPFYGESGGQVGDQGSIAAPGGRVRVEDTRRPVPGLVTHVGVVEEGELAVGDLVELAVDDRRRDLIRANHSATHLLQLALRETLGDHVKQAGSIVAPDYLRFDFSHFQPLSEEELNAIERRVNELVRENAETETAVLKLEDARQSGAMMIFGEKYGDVVRVVRLGPSKELCGGTHVRRTGDIAFFKIGSEESIAAGVRRIVAYTGPQAIELSQREADELRRAAALFKAGAFEVAQKIEQTQKRVKDLERALDEAKGKIASAQSGDLAAQARDVKGAKVLAVRVQGDGKSLRELADKLRDRLGTGVVALGAEQDGKAILLVAVTKDLTARLKAGELVKEAAKLVGGSGGGKPDLAQAGGSDPAGLEKALAKVQELAVAALG.

Zn(2+) contacts are provided by histidine 594, histidine 598, cysteine 695, and histidine 699.

Belongs to the class-II aminoacyl-tRNA synthetase family. Requires Zn(2+) as cofactor.

The protein localises to the cytoplasm. It catalyses the reaction tRNA(Ala) + L-alanine + ATP = L-alanyl-tRNA(Ala) + AMP + diphosphate. Functionally, catalyzes the attachment of alanine to tRNA(Ala) in a two-step reaction: alanine is first activated by ATP to form Ala-AMP and then transferred to the acceptor end of tRNA(Ala). Also edits incorrectly charged Ser-tRNA(Ala) and Gly-tRNA(Ala) via its editing domain. The sequence is that of Alanine--tRNA ligase from Anaeromyxobacter sp. (strain Fw109-5).